Consider the following 144-residue polypeptide: Small ribosomal subunit protein eS19A (144 aa).

The protein belongs to the eukaryotic ribosomal protein eS19 family. Component of the small ribosomal subunit (SSU). Mature yeast ribosomes consist of a small (40S) and a large (60S) subunit. The 40S small subunit contains 1 molecule of ribosomal RNA (18S rRNA) and 33 different proteins (encoded by 57 genes). The large 60S subunit contains 3 rRNA molecules (25S, 5.8S and 5S rRNA) and 46 different proteins (encoded by 81 genes).

Its subcellular location is the cytoplasm. Its function is as follows. Component of the ribosome, a large ribonucleoprotein complex responsible for the synthesis of proteins in the cell. The small ribosomal subunit (SSU) binds messenger RNAs (mRNAs) and translates the encoded message by selecting cognate aminoacyl-transfer RNA (tRNA) molecules. The large subunit (LSU) contains the ribosomal catalytic site termed the peptidyl transferase center (PTC), which catalyzes the formation of peptide bonds, thereby polymerizing the amino acids delivered by tRNAs into a polypeptide chain. The nascent polypeptides leave the ribosome through a tunnel in the LSU and interact with protein factors that function in enzymatic processing, targeting, and the membrane insertion of nascent chains at the exit of the ribosomal tunnel. eS19 is required for proper maturation of the small (40S) ribosomal subunit. Binds to 40S pre-ribosomal particles, probably required after association of NOC4 but before association of ENP1, TSR1 and RIO2 with 20/21S pre-rRNA. The protein is Small ribosomal subunit protein eS19A of Saccharomyces cerevisiae (strain ATCC 204508 / S288c) (Baker's yeast).